Here is a 282-residue protein sequence, read N- to C-terminus: NAC domain-containing protein 1 (282 aa).

In terms of domain architecture, NAC spans 9–161; sequence LPPGFRFHPT…DWVLCRIYKK (153 aa). Residues 106–167 mediate DNA binding; that stretch reads VGIKKALVFY…IYKKKNLGRT (62 aa). Residues 161-188 are a coiled coil; it reads KKNLGRTIEMMKVEEEELEAQNVSTTNN.

Expressed in roots, stem, flowers, and leaves.

It is found in the nucleus. Functionally, transcription factor that binds DNA motifs 5'-CGT[AG](5N)NACG[ACT][AC][AT][ACG][ACT]-3' and 5'-CACG[ACT][AC][AT][AGT][CT]-3' in target genes promoters. Promotes leaf senescence and reduces fruit yield and sugar content, probably by establishing abscisic acid (ABA) homeostasis. In Solanum lycopersicum (Tomato), this protein is NAC domain-containing protein 1.